A 758-amino-acid polypeptide reads, in one-letter code: Glucocorticoid receptor (758 aa).

2 disordered regions span residues 1 to 61 (MDPG…SANG) and 349 to 382 (GMSS…PSGP). The modulating stretch occupies residues 1 to 386 (MDPGGLKHSK…AKPSGPTHKI (386 aa)). The segment covering 26–42 (GSFSGDTGGSKSTTSTS) has biased composition (low complexity). 2 NR C4-type zinc fingers span residues 387 to 407 (CLVC…CGSC) and 432 to 456 (CAGR…FRKC). Residues 387–461 (CLVCSDEASG…RFRKCLQAGM (75 aa)) constitute a DNA-binding region (nuclear receptor). Residues 462 to 498 (NLEARKNKKLIRLKGQQTTMEPNPPPPDERACALIPK) are hinge. Positions 499 to 733 (SMPQLVPTML…FPEMLAEIIS (235 aa)) constitute an NR LBD domain.

The protein belongs to the nuclear hormone receptor family. NR3 subfamily. As to quaternary structure, heteromultimeric cytoplasmic complex with HSP90AA1, HSPA1A/HSPA1B, and FKBP5 or another immunophilin such as PPID, STIP1, or the immunophilin homolog PPP5C. Upon ligand binding FKBP5 dissociates from the complex and FKBP4 takes its place, thereby linking the complex to dynein and mediating transport to the nucleus, where the complex dissociates. Directly interacts with UNC45A. Binds to DNA as a homodimer, and as heterodimer with NR3C2 or the retinoid X receptor. Binds STAT5A and STAT5B homodimers and heterodimers. Interacts with NRIP1, POU2F1, POU2F2 and TRIM28. Interacts with several coactivator complexes, including the SMARCA4 complex, CREBBP/EP300, TADA2L (Ada complex) and p160 coactivators such as NCOA2 and NCOA6. Interaction with BAG1 inhibits transactivation. Interacts with HEXIM1, PELP1 and TGFB1I1. Interacts with NCOA1, NCOA3, SMARCA4, SMARCC1, SMARCD1, and SMARCE1. Post-translationally, phosphorylated in the absence of hormone; becomes hyperphosphorylated in the presence of glucocorticoids. May be dephosphorylated by PPP5C, attenuates NR3C1 action. As to expression, isoform 1 is expressed in all tissues tested including liver, gills, intestine, skeletal muscle, kidney, heart, spleen, stomach, brain, pituitary, ovary, testis, skin and bladder. Isoform 2 is found only in testis.

The protein localises to the cytoplasm. It localises to the nucleus. The protein resides in the mitochondrion. It is found in the cytoskeleton. Its subcellular location is the spindle. The protein localises to the microtubule organizing center. It localises to the centrosome. In terms of biological role, receptor for glucocorticoids (GC). Has a dual mode of action: as a transcription factor that binds to glucocorticoid response elements (GRE), both for nuclear and mitochondrial DNA, and as a modulator of other transcription factors. Affects inflammatory responses, cellular proliferation and differentiation in target tissues. Involved in chromatin remodeling. Plays a role in rapid mRNA degradation by binding to the 5' UTR of target mRNAs and interacting with PNRC2 in a ligand-dependent manner which recruits the RNA helicase UPF1 and the mRNA-decapping enzyme DCP1A, leading to RNA decay. Could act as a coactivator for STAT5-dependent transcription upon growth hormone (GH) stimulation and could reveal an essential role of hepatic GR in the control of body growth. Mediates glucocorticoid-induced apoptosis. Promotes accurate chromosome segregation during mitosis. May act as a tumor suppressor. May play a negative role in adipogenesis through the regulation of lipolytic and antilipogenic gene expression. The sequence is that of Glucocorticoid receptor (nr3c1) from Oncorhynchus mykiss (Rainbow trout).